The following is a 975-amino-acid chain: NLR family member X1 (975 aa).

Residues 1–86 (MRWGHHLPRA…EAIQRHRRNL (86 aa)) constitute a mitochondrion transit peptide. Residues 75 to 556 (ATEAIQRHRR…RALPLLFNLI (482 aa)) form a required for interaction with MAVS region. An NACHT domain is found at 160–483 (QTVVLYGTVG…LRFFLAPCVE (324 aa)). 166–173 (GTVGTGKS) serves as a coordination point for ATP. The tract at residues 556-974 (IKVVPRVFGR…ALLEQLGSSG (419 aa)) is required for the repression of MAVS-induced interferon signaling. Residues 667–694 (RQVLPPSELLDHLFFHYEFQNQRFSAEV) form the LRRNT domain. LRR repeat units follow at residues 695–718 (LSSL…VVAA), 724–747 (RHAL…TLLP), 749–777 (FLRA…LLHD), 778–801 (QCQI…VLME), 811–834 (HLSL…LDRN), 835–857 (RQLQ…ALAR), 858–877 (AARE…ELSS), and 878–899 (EGRQ…VVVS). The 65-residue stretch at 906-970 (VSEYWSVILS…GEVRALLEQL (65 aa)) folds into the LRRCT domain.

The protein belongs to the NLRP family. As to quaternary structure, homohexamer. Interacts with MAVS. Interacts with TUFM. In terms of assembly, (Microbial infection) Interacts with influenza A virus protein PB1-F2. In terms of tissue distribution, ubiquitously expressed. Strongest expression in mammary gland, heart and muscle. Detected in HeLa, HEK293T, THP-1, HL-60, Raji and Jurkat cell lines (at protein level).

Its subcellular location is the mitochondrion outer membrane. Functionally, participates in antiviral signaling. Acts as a negative regulator of MAVS-mediated antiviral responses, through the inhibition of the virus-induced RLH (RIG-like helicase)-MAVS interaction. Instead, promotes autophagy by interacting with TUFM and subsequently recruiting the autophagy-related proteins ATG5 and ATG12. Also regulates MAVS-dependent NLRP3 inflammasome activation to attenuate apoptosis. Has no inhibitory function on NF-kappa-B signaling pathway, but enhances NF-kappa-B and JUN N-terminal kinase dependent signaling through the production of reactive oxygen species. Regulates viral mediated-inflammation and energy metabolism in a sex-dependent manner. In females, prevents uncontrolled inflammation and energy metabolism and thus, may contribute to the sex differences observed in infectious and inflammatory diseases. The sequence is that of NLR family member X1 (NLRX1) from Homo sapiens (Human).